A 57-amino-acid chain; its full sequence is Three-finger toxin Tschuditoxin-I (57 aa).

3 disulfides stabilise this stretch: Cys-3–Cys-22, Cys-17–Cys-39, and Cys-41–Cys-52.

In terms of tissue distribution, expressed by the venom gland.

It is found in the secreted. Produces peripheral paralysis by blocking neuromuscular transmission at the postsynaptic site. Binds to and inhibits the endogenous nicotinic acetylcholine receptors (nAChR). This neurotoxin is lethal to mice by intraperitoneal or intravenous injection. This chain is Three-finger toxin Tschuditoxin-I, found in Micrurus tschudii (Desert coral snake).